The chain runs to 483 residues: Regulatory protein ViaA (483 aa).

It belongs to the ViaA family. Homodimer. Interacts with RavA.

Its subcellular location is the cytoplasm. In terms of biological role, component of the RavA-ViaA chaperone complex, which may act on the membrane to optimize the function of some of the respiratory chains. ViaA stimulates the ATPase activity of RavA. The polypeptide is Regulatory protein ViaA (Escherichia coli O139:H28 (strain E24377A / ETEC)).